We begin with the raw amino-acid sequence, 338 residues long: D-erythrose-4-phosphate dehydrogenase (338 aa).

Arg-12–Ile-13 is an NAD(+) binding site. Substrate-binding positions include Ser-154–Thr-156, Arg-200, Thr-213–Lys-214, and Arg-236. Cys-155 functions as the Nucleophile in the catalytic mechanism. Residue Asn-318 participates in NAD(+) binding.

It belongs to the glyceraldehyde-3-phosphate dehydrogenase family. Epd subfamily. As to quaternary structure, homotetramer.

The protein resides in the cytoplasm. The enzyme catalyses D-erythrose 4-phosphate + NAD(+) + H2O = 4-phospho-D-erythronate + NADH + 2 H(+). It functions in the pathway cofactor biosynthesis; pyridoxine 5'-phosphate biosynthesis; pyridoxine 5'-phosphate from D-erythrose 4-phosphate: step 1/5. Functionally, catalyzes the NAD-dependent conversion of D-erythrose 4-phosphate to 4-phosphoerythronate. The polypeptide is D-erythrose-4-phosphate dehydrogenase (Tolumonas auensis (strain DSM 9187 / NBRC 110442 / TA 4)).